Reading from the N-terminus, the 451-residue chain is MDSPLAIIVLAAGKGTRMKSDLHKVLHPIAGRPMLMHLMASAAELSPARQVVVAGHGREQLEKALGGSADIAVQDPQLGTAHAVQQAQGALSGFEGDVLILYGDVPFVRASTMRAMIERLHGADEPAAVVLGFAPADTLQYGRVIADDGRIVKMVEHKDASEAERACRVCNSGLMAVRSADLFGLLARVGNDNAQGEYYLPDVVNIAIADGRTCAVVVTDDADEVAGINSRGELAEAEGRWQQRRRAAAMADGASLIAPETVWFAWDTVLGRDVTIEPNVFFGPGVTVGDNVTIHAFSHLEGASLAQGVEVGPYARLRPGARLEEKVKVGNFVEVKNAVLHKGAKANHLTYLGDADVGAGANIGAGTITCNYDGYFKHRTVIGERAFIGSNSALIAPVRIGADAIVAAGSAVSRDVADGELRMVRAEQLVKPGWADRFHDAMKKKKAEKKS.

Residues 1–231 form a pyrophosphorylase region; it reads MDSPLAIIVL…ADEVAGINSR (231 aa). Residues 10–13, Lys24, Gln74, 79–80, 102–104, Gly142, Glu156, Asn171, and Asn229 contribute to the UDP-N-acetyl-alpha-D-glucosamine site; these read LAAG, GT, and YGD. Residue Asp104 coordinates Mg(2+). Position 229 (Asn229) interacts with Mg(2+). The segment at 232 to 252 is linker; it reads GELAEAEGRWQQRRRAAAMAD. The tract at residues 253–451 is N-acetyltransferase; the sequence is GASLIAPETV…MKKKKAEKKS (199 aa). Residues Arg318 and Lys336 each coordinate UDP-N-acetyl-alpha-D-glucosamine. His348 functions as the Proton acceptor in the catalytic mechanism. UDP-N-acetyl-alpha-D-glucosamine-binding residues include Tyr351 and Asn362. Acetyl-CoA contacts are provided by residues Ala365, 371–372, Ser390, Ala408, and Arg425; that span reads NY.

It in the N-terminal section; belongs to the N-acetylglucosamine-1-phosphate uridyltransferase family. This sequence in the C-terminal section; belongs to the transferase hexapeptide repeat family. Homotrimer. It depends on Mg(2+) as a cofactor.

Its subcellular location is the cytoplasm. The catalysed reaction is alpha-D-glucosamine 1-phosphate + acetyl-CoA = N-acetyl-alpha-D-glucosamine 1-phosphate + CoA + H(+). It carries out the reaction N-acetyl-alpha-D-glucosamine 1-phosphate + UTP + H(+) = UDP-N-acetyl-alpha-D-glucosamine + diphosphate. It functions in the pathway nucleotide-sugar biosynthesis; UDP-N-acetyl-alpha-D-glucosamine biosynthesis; N-acetyl-alpha-D-glucosamine 1-phosphate from alpha-D-glucosamine 6-phosphate (route II): step 2/2. Its pathway is nucleotide-sugar biosynthesis; UDP-N-acetyl-alpha-D-glucosamine biosynthesis; UDP-N-acetyl-alpha-D-glucosamine from N-acetyl-alpha-D-glucosamine 1-phosphate: step 1/1. The protein operates within bacterial outer membrane biogenesis; LPS lipid A biosynthesis. Its function is as follows. Catalyzes the last two sequential reactions in the de novo biosynthetic pathway for UDP-N-acetylglucosamine (UDP-GlcNAc). The C-terminal domain catalyzes the transfer of acetyl group from acetyl coenzyme A to glucosamine-1-phosphate (GlcN-1-P) to produce N-acetylglucosamine-1-phosphate (GlcNAc-1-P), which is converted into UDP-GlcNAc by the transfer of uridine 5-monophosphate (from uridine 5-triphosphate), a reaction catalyzed by the N-terminal domain. This Novosphingobium aromaticivorans (strain ATCC 700278 / DSM 12444 / CCUG 56034 / CIP 105152 / NBRC 16084 / F199) protein is Bifunctional protein GlmU.